We begin with the raw amino-acid sequence, 238 residues long: Large ribosomal subunit protein uL2 (238 aa).

Positions 200 to 238 are disordered; sequence HGGGLHQSVSRPSTVSRNAPPGRKVGHIAARRTGRKEGK. Polar residues predominate over residues 206-216; the sequence is QSVSRPSTVSR. Over residues 223 to 238 the composition is skewed to basic residues; that stretch reads KVGHIAARRTGRKEGK.

Belongs to the universal ribosomal protein uL2 family. As to quaternary structure, part of the 50S ribosomal subunit. Forms a bridge to the 30S subunit in the 70S ribosome.

Functionally, one of the primary rRNA binding proteins. Required for association of the 30S and 50S subunits to form the 70S ribosome, for tRNA binding and peptide bond formation. It has been suggested to have peptidyltransferase activity; this is somewhat controversial. Makes several contacts with the 16S rRNA in the 70S ribosome. The chain is Large ribosomal subunit protein uL2 from Saccharolobus islandicus (strain L.S.2.15 / Lassen #1) (Sulfolobus islandicus).